We begin with the raw amino-acid sequence, 151 residues long: Small ribosomal subunit protein uS15 (151 aa).

An N6-acetyllysine; alternate modification is found at lysine 27. Residue lysine 27 is modified to N6-succinyllysine; alternate. Lysine 27 participates in a covalent cross-link: Glycyl lysine isopeptide (Lys-Gly) (interchain with G-Cter in ubiquitin). Residue serine 30 is modified to Phosphoserine. Lysine 34 bears the N6-succinyllysine mark. Tyrosine 38 is subject to Phosphotyrosine. A Glycyl lysine isopeptide (Lys-Gly) (interchain with G-Cter in SUMO2) cross-link involves residue lysine 43.

It belongs to the universal ribosomal protein uS15 family. In terms of assembly, component of the small ribosomal subunit. Part of the small subunit (SSU) processome, composed of more than 70 proteins and the RNA chaperone small nucleolar RNA (snoRNA) U3. In terms of processing, ubiquitinated at Lys-27 by RNF14 and RNF25 in response to ribosome collisions (ribosome stalling).

It is found in the cytoplasm. It localises to the nucleus. Its subcellular location is the nucleolus. Component of the small ribosomal subunit. The ribosome is a large ribonucleoprotein complex responsible for the synthesis of proteins in the cell. Part of the small subunit (SSU) processome, first precursor of the small eukaryotic ribosomal subunit. During the assembly of the SSU processome in the nucleolus, many ribosome biogenesis factors, an RNA chaperone and ribosomal proteins associate with the nascent pre-rRNA and work in concert to generate RNA folding, modifications, rearrangements and cleavage as well as targeted degradation of pre-ribosomal RNA by the RNA exosome. This chain is Small ribosomal subunit protein uS15, found in Homo sapiens (Human).